Reading from the N-terminus, the 106-residue chain is Large ribosomal subunit protein bL21 (106 aa).

Belongs to the bacterial ribosomal protein bL21 family. As to quaternary structure, part of the 50S ribosomal subunit. Contacts protein L20.

In terms of biological role, this protein binds to 23S rRNA in the presence of protein L20. The sequence is that of Large ribosomal subunit protein bL21 from Streptomyces griseus subsp. griseus (strain JCM 4626 / CBS 651.72 / NBRC 13350 / KCC S-0626 / ISP 5235).